The sequence spans 91 residues: Small ribosomal subunit protein uS19 (91 aa).

It belongs to the universal ribosomal protein uS19 family.

Protein S19 forms a complex with S13 that binds strongly to the 16S ribosomal RNA. This chain is Small ribosomal subunit protein uS19, found in Chromohalobacter salexigens (strain ATCC BAA-138 / DSM 3043 / CIP 106854 / NCIMB 13768 / 1H11).